Reading from the N-terminus, the 336-residue chain is Peroxidase 11 (336 aa).

A signal peptide spans 1 to 20 (MMRLLFVFFMVHTIFIPCFS). Disulfide bonds link cysteine 39/cysteine 119, cysteine 72/cysteine 77, cysteine 125/cysteine 331, and cysteine 204/cysteine 236. The Proton acceptor role is filled by histidine 70. The Ca(2+) site is built by aspartate 71, valine 74, glycine 76, aspartate 78, and serine 80. A substrate-binding site is contributed by proline 167. Residue histidine 197 participates in heme b binding. Threonine 198 lines the Ca(2+) pocket. N-linked (GlcNAc...) asparagine glycosylation is present at asparagine 246. Residues aspartate 251, threonine 254, and aspartate 259 each coordinate Ca(2+).

Belongs to the peroxidase family. Classical plant (class III) peroxidase subfamily. Heme b serves as cofactor. Requires Ca(2+) as cofactor. In terms of tissue distribution, expressed in roots and stems.

The protein localises to the secreted. The enzyme catalyses 2 a phenolic donor + H2O2 = 2 a phenolic radical donor + 2 H2O. Functionally, removal of H(2)O(2), oxidation of toxic reductants, biosynthesis and degradation of lignin, suberization, auxin catabolism, response to environmental stresses such as wounding, pathogen attack and oxidative stress. These functions might be dependent on each isozyme/isoform in each plant tissue. This chain is Peroxidase 11 (PER11), found in Arabidopsis thaliana (Mouse-ear cress).